Consider the following 225-residue polypeptide: 2-C-methyl-D-erythritol 4-phosphate cytidylyltransferase (225 aa).

The protein belongs to the IspD/TarI cytidylyltransferase family. IspD subfamily.

It catalyses the reaction 2-C-methyl-D-erythritol 4-phosphate + CTP + H(+) = 4-CDP-2-C-methyl-D-erythritol + diphosphate. Its pathway is isoprenoid biosynthesis; isopentenyl diphosphate biosynthesis via DXP pathway; isopentenyl diphosphate from 1-deoxy-D-xylulose 5-phosphate: step 2/6. Its function is as follows. Catalyzes the formation of 4-diphosphocytidyl-2-C-methyl-D-erythritol from CTP and 2-C-methyl-D-erythritol 4-phosphate (MEP). In Haemophilus influenzae (strain 86-028NP), this protein is 2-C-methyl-D-erythritol 4-phosphate cytidylyltransferase.